Reading from the N-terminus, the 85-residue chain is UPF0335 protein Oant_1161 (85 aa).

It belongs to the UPF0335 family.

This is UPF0335 protein Oant_1161 from Brucella anthropi (strain ATCC 49188 / DSM 6882 / CCUG 24695 / JCM 21032 / LMG 3331 / NBRC 15819 / NCTC 12168 / Alc 37) (Ochrobactrum anthropi).